The chain runs to 631 residues: Vacuolar-sorting receptor 6 (631 aa).

The signal sequence occupies residues 1 to 25 (MSLIHKGATLALFLALTMVVNGVFG). The Lumenal portion of the chain corresponds to 26–563 (RFIVEKSSVT…CIERSGSRIG (538 aa)). The 109-residue stretch at 57-165 (NYGGYMIGSV…SFANTLKQAL (109 aa)) folds into the PA domain. Asn294 and Asn431 each carry an N-linked (GlcNAc...) asparagine glycan. EGF-like domains follow at residues 413-463 (ETNE…TSCE) and 494-540 (ETSG…FECK). 5 disulfides stabilise this stretch: Cys417–Cys435, Cys424–Cys444, Cys446–Cys462, Cys498–Cys511, and Cys530–Cys539. A helical membrane pass occupies residues 564–584 (WFPTFVILAAVASICVGGYVF). Residues 585–631 (YKYRLRSYMDSEIMAIMSQYMPLESQNTTDPMTGESQHQQLRLTSAA) lie on the Cytoplasmic side of the membrane. The short motif at 604-607 (YMPL) is the Tyrosine-based internalization motif element. The interval 610–631 (QNTTDPMTGESQHQQLRLTSAA) is disordered.

The protein belongs to the VSR (BP-80) family. Expressed in seedlings, roots, leaves, flowers and siliques.

The protein resides in the membrane. Its subcellular location is the golgi apparatus membrane. It is found in the cytoplasmic vesicle. The protein localises to the clathrin-coated vesicle membrane. It localises to the prevacuolar compartment membrane. Functionally, vacuolar-sorting receptor (VSR) involved in clathrin-coated vesicles sorting from Golgi apparatus to vacuoles. The protein is Vacuolar-sorting receptor 6 (VSR6) of Arabidopsis thaliana (Mouse-ear cress).